The following is a 1520-amino-acid chain: Putative lipoprotein AcfD homolog (1520 aa).

The N-terminal stretch at 1-23 (MNKKFKYKKSLLAAILSATLLAG) is a signal peptide. Disordered regions lie at residues 22 to 107 (AGCD…GATC) and 226 to 247 (NAAT…TTPG). Cys-24 is lipidated: N-palmitoyl cysteine. A lipid anchor (S-diacylglycerol cysteine) is attached at Cys-24. Positions 31–42 (SSSDTPPVDSGT) are enriched in low complexity. Over residues 51–77 (DPTPNPEPTPEPTPDPEPTPEPIPDPE) the composition is skewed to pro residues. Polar residues predominate over residues 97 to 107 (GGSQRVTGATC). A compositionally biased stretch (low complexity) spans 234 to 247 (STHTSPVVPVTTPG). A Peptidase M60 domain is found at 1081–1381 (GNMQSTGLWA…MYAQLKEWAE (301 aa)). The interval 1498 to 1520 (DLPKPEQGPETINQVTEHKMSAE) is disordered.

The protein to V.cholerae AcfD (VC_0845).

It localises to the cell inner membrane. Involved in a type II secretion system (T2SS, formerly general secretion pathway, GSP) for the export of folded proteins across the outer membrane. In Escherichia coli (strain K12), this protein is Putative lipoprotein AcfD homolog (yghJ).